Reading from the N-terminus, the 82-residue chain is Defensin-like protein 22 (82 aa).

A signal peptide spans methionine 1–glycine 24. Disulfide bonds link cysteine 34–cysteine 82, cysteine 44–cysteine 69, cysteine 53–cysteine 78, and cysteine 57–cysteine 80.

Belongs to the DEFL family.

The protein resides in the secreted. The protein is Defensin-like protein 22 of Arabidopsis thaliana (Mouse-ear cress).